We begin with the raw amino-acid sequence, 237 residues long: Probable transcriptional regulatory protein WS1016 (237 aa).

It belongs to the TACO1 family.

It is found in the cytoplasm. The polypeptide is Probable transcriptional regulatory protein WS1016 (Wolinella succinogenes (strain ATCC 29543 / DSM 1740 / CCUG 13145 / JCM 31913 / LMG 7466 / NCTC 11488 / FDC 602W) (Vibrio succinogenes)).